Here is a 488-residue protein sequence, read N- to C-terminus: Cobyric acid synthase (488 aa).

Positions 247–440 (LLRVIVPVLP…VHGVFDEPTA (194 aa)) constitute a GATase cobBQ-type domain. C328 (nucleophile) is an active-site residue. Residue H432 is part of the active site.

The protein belongs to the CobB/CobQ family. CobQ subfamily.

It functions in the pathway cofactor biosynthesis; adenosylcobalamin biosynthesis. Catalyzes amidations at positions B, D, E, and G on adenosylcobyrinic A,C-diamide. NH(2) groups are provided by glutamine, and one molecule of ATP is hydrogenolyzed for each amidation. In Cupriavidus pinatubonensis (strain JMP 134 / LMG 1197) (Cupriavidus necator (strain JMP 134)), this protein is Cobyric acid synthase.